Here is a 259-residue protein sequence, read N- to C-terminus: MENISEKAIIKGKIGKNCKIGEGVIIDENVVIGDNNIIDPYTIITGYTTIGDNNHIYSHAVLGSEPQDLKYHGEKTELIIGNNNKIREFTLINPGTEGGGAVTKIGDNNLLMGYVHVAHDVIIANNCILANAATLAGHVELEDYVVIGGMTPVHQFVKIGAHAMIGGASAVAQDIPPFTIAEGNRAKLRGLNLTGLRRRFQNRSDIDAIKKAYKELFESGKPLKDTAKEILESTDNEYVKHLCEFVLNSKRGIPYDRKV.

This sequence belongs to the transferase hexapeptide repeat family. LpxA subfamily. As to quaternary structure, homotrimer.

The protein localises to the cytoplasm. The catalysed reaction is a (3R)-hydroxyacyl-[ACP] + UDP-N-acetyl-alpha-D-glucosamine = a UDP-3-O-[(3R)-3-hydroxyacyl]-N-acetyl-alpha-D-glucosamine + holo-[ACP]. It participates in glycolipid biosynthesis; lipid IV(A) biosynthesis; lipid IV(A) from (3R)-3-hydroxytetradecanoyl-[acyl-carrier-protein] and UDP-N-acetyl-alpha-D-glucosamine: step 1/6. Involved in the biosynthesis of lipid A, a phosphorylated glycolipid that anchors the lipopolysaccharide to the outer membrane of the cell. The polypeptide is Acyl-[acyl-carrier-protein]--UDP-N-acetylglucosamine O-acyltransferase (Nautilia profundicola (strain ATCC BAA-1463 / DSM 18972 / AmH)).